The chain runs to 460 residues: UDP-N-acetylmuramate--L-alanine ligase (460 aa).

Gly-112–Thr-118 serves as a coordination point for ATP.

It belongs to the MurCDEF family.

It localises to the cytoplasm. The enzyme catalyses UDP-N-acetyl-alpha-D-muramate + L-alanine + ATP = UDP-N-acetyl-alpha-D-muramoyl-L-alanine + ADP + phosphate + H(+). The protein operates within cell wall biogenesis; peptidoglycan biosynthesis. Its function is as follows. Cell wall formation. In Pelobacter propionicus (strain DSM 2379 / NBRC 103807 / OttBd1), this protein is UDP-N-acetylmuramate--L-alanine ligase.